We begin with the raw amino-acid sequence, 181 residues long: Large ribosomal subunit protein uL6 (181 aa).

The protein belongs to the universal ribosomal protein uL6 family. In terms of assembly, part of the 50S ribosomal subunit.

This protein binds to the 23S rRNA, and is important in its secondary structure. It is located near the subunit interface in the base of the L7/L12 stalk, and near the tRNA binding site of the peptidyltransferase center. The chain is Large ribosomal subunit protein uL6 from Desulforudis audaxviator (strain MP104C).